Here is a 259-residue protein sequence, read N- to C-terminus: 5'-nucleotidase SurE (259 aa).

Residues D8, D9, S40, and N92 each coordinate a divalent metal cation.

Belongs to the SurE nucleotidase family. A divalent metal cation is required as a cofactor.

It is found in the cytoplasm. It catalyses the reaction a ribonucleoside 5'-phosphate + H2O = a ribonucleoside + phosphate. In terms of biological role, nucleotidase that shows phosphatase activity on nucleoside 5'-monophosphates. The polypeptide is 5'-nucleotidase SurE (Stenotrophomonas maltophilia (strain K279a)).